An 80-amino-acid polypeptide reads, in one-letter code: Small, acid-soluble spore protein Tlp (80 aa).

This sequence belongs to the Tlp family.

The protein localises to the spore core. This is Small, acid-soluble spore protein Tlp from Bacillus pumilus (strain SAFR-032).